Reading from the N-terminus, the 205-residue chain is Recombination protein RecR (205 aa).

The segment at 64-79 (CSRCYFITQNDLCAIC) adopts a C4-type zinc-finger fold. Residues 87–182 (RIVCVVEEPL…RVTRLARGLP (96 aa)) form the Toprim domain.

The protein belongs to the RecR family.

May play a role in DNA repair. It seems to be involved in an RecBC-independent recombinational process of DNA repair. It may act with RecF and RecO. The protein is Recombination protein RecR of Roseiflexus castenholzii (strain DSM 13941 / HLO8).